Here is a 1668-residue protein sequence, read N- to C-terminus: Zinc finger CCCH domain-containing protein 13 (1668 aa).

2 disordered regions span residues M1–A38 and T56–N157. The segment covering V10–R23 has biased composition (polar residues). A C3H1-type zinc finger spans residues S36–S64. A phosphoserine mark is found at S64 and S77. The segment covering R76–E136 has biased composition (basic and acidic residues). Residues K179 and K194 each participate in a glycyl lysine isopeptide (Lys-Gly) (interchain with G-Cter in SUMO2) cross-link. Disordered stretches follow at residues E190–A1112 and A1125–D1466. S198, S207, S209, and S211 each carry phosphoserine. A compositionally biased stretch (low complexity) spans S204 to R213. A compositionally biased stretch (basic residues) spans K214–S224. T237 is modified (phosphothreonine). Phosphoserine is present on residues S238 and S242. Positions A239–N254 are enriched in polar residues. T263 bears the Phosphothreonine mark. S265 carries the post-translational modification Phosphoserine. Residues K283–R315 show a composition bias toward basic and acidic residues. Phosphoserine is present on residues S316, S318, S325, and S328. Low complexity predominate over residues H323–S346. A phosphothreonine mark is found at T354 and T364. Residues S370, S372, and S381 each carry the phosphoserine modification. Residues S370–P382 show a composition bias toward low complexity. 2 stretches are compositionally biased toward basic and acidic residues: residues P394–R434 and S442–S575. Residues D584–H593 show a composition bias toward low complexity. Over residues D594–R640 the composition is skewed to basic and acidic residues. Position 643 is a phosphoserine (S643). Residues I645–D789 are a coiled coil. A compositionally biased stretch (basic and acidic residues) spans G649–K821. Residues S831, S833, S837, S845, S848, S853, S873, S875, and S877 each carry the phosphoserine modification. Residues L881–K957 are compositionally biased toward basic and acidic residues. A Phosphothreonine modification is found at T882. S943 bears the Phosphoserine mark. A compositionally biased stretch (basic residues) spans K958–K969. Over residues K970 to N981 the composition is skewed to basic and acidic residues. Residues S986, S993, S1010, S1014, and S1017 each carry the phosphoserine modification. The span at K996–S1010 shows a compositional bias: basic residues. The residue at position 1033 (T1033) is a Phosphothreonine. A compositionally biased stretch (basic and acidic residues) spans P1073–H1083. Composition is skewed to low complexity over residues T1084–L1100 and A1125–N1153. The segment covering T1163–R1188 has biased composition (basic and acidic residues). T1170 carries the post-translational modification Phosphothreonine. Phosphoserine occurs at positions 1191, 1194, 1208, and 1210. The span at S1213–G1223 shows a compositional bias: basic and acidic residues. Residue S1230 is modified to Phosphoserine. Composition is skewed to basic and acidic residues over residues G1231–V1286 and D1294–F1379. Residues Q1300–S1366 are a coiled coil. S1364, S1366, S1382, S1386, S1406, S1409, S1438, L1453, G1456, S1465, and D1466 each carry phosphoserine. Composition is skewed to basic and acidic residues over residues S1386 to L1421 and E1429 to S1438.

The protein belongs to the ZC3H13 family. In terms of assembly, component of the WMM complex, a N6-methyltransferase complex composed of a catalytic subcomplex, named MAC, and of an associated subcomplex, named MACOM. The MAC subcomplex is composed of METTL3 and METTL14. The MACOM subcomplex is composed of WTAP, ZC3H13, CBLL1/HAKAI, VIRMA, and, in some cases of RBM15 (RBM15 or RBM15B). Also a component of a MACOM-like complex, named WTAP complex, composed of WTAP, ZC3H13, CBLL1/HAKAI, VIRMA, RBM15, BCLAF1 and THRAP3.

Its subcellular location is the nucleus speckle. It is found in the nucleus. The protein localises to the nucleoplasm. Associated component of the WMM complex, a complex that mediates N6-methyladenosine (m6A) methylation of RNAs, a modification that plays a role in the efficiency of mRNA splicing and RNA processing. Acts as a key regulator of m6A methylation by promoting m6A methylation of mRNAs at the 3'-UTR. Controls embryonic stem cells (ESCs) pluripotency via its role in m6A methylation. In the WMM complex, anchors component of the MACOM subcomplex in the nucleus. Also required for bridging WTAP to the RNA-binding component RBM15 (RBM15 or RBM15B). This Homo sapiens (Human) protein is Zinc finger CCCH domain-containing protein 13.